The chain runs to 256 residues: GTP cyclohydrolase FolE2 (256 aa).

This sequence belongs to the GTP cyclohydrolase IV family.

The catalysed reaction is GTP + H2O = 7,8-dihydroneopterin 3'-triphosphate + formate + H(+). The protein operates within cofactor biosynthesis; 7,8-dihydroneopterin triphosphate biosynthesis; 7,8-dihydroneopterin triphosphate from GTP: step 1/1. Converts GTP to 7,8-dihydroneopterin triphosphate. This Caldicellulosiruptor bescii (strain ATCC BAA-1888 / DSM 6725 / KCTC 15123 / Z-1320) (Anaerocellum thermophilum) protein is GTP cyclohydrolase FolE2.